The sequence spans 104 residues: Large ribosomal subunit protein uL24 (104 aa).

Belongs to the universal ribosomal protein uL24 family. Part of the 50S ribosomal subunit.

In terms of biological role, one of two assembly initiator proteins, it binds directly to the 5'-end of the 23S rRNA, where it nucleates assembly of the 50S subunit. One of the proteins that surrounds the polypeptide exit tunnel on the outside of the subunit. The protein is Large ribosomal subunit protein uL24 of Buchnera aphidicola subsp. Baizongia pistaciae (strain Bp).